We begin with the raw amino-acid sequence, 705 residues long: Polyribonucleotide nucleotidyltransferase (705 aa).

Mg(2+)-binding residues include aspartate 485 and aspartate 491. Residues proline 552–isoleucine 611 form the KH domain. An S1 motif domain is found at glycine 621–lysine 689.

Belongs to the polyribonucleotide nucleotidyltransferase family. Mg(2+) serves as cofactor.

The protein localises to the cytoplasm. The catalysed reaction is RNA(n+1) + phosphate = RNA(n) + a ribonucleoside 5'-diphosphate. Involved in mRNA degradation. Catalyzes the phosphorolysis of single-stranded polyribonucleotides processively in the 3'- to 5'-direction. The chain is Polyribonucleotide nucleotidyltransferase from Clostridium novyi (strain NT).